The following is a 448-amino-acid chain: Antilisterial bacteriocin subtilosin biosynthesis protein AlbA (448 aa).

Residues Phe115–Asp329 enclose the Radical SAM core domain. The [4Fe-4S] cluster site is built by Cys129, Cys133, Cys136, Cys408, Cys414, and Cys417.

[4Fe-4S] cluster is required as a cofactor.

It is found in the cytoplasm. In terms of biological role, catalyzes the formation of 3 thioether bonds during production of the sactipeptide subtilosin from SboA. In vitro the thioether bonds cannot be made in the absence of the SboA propeptide, suggesting this is the first reaction in subtilosin maturation. In vitro, in the absence of a second substrate, cleaves S-adenosyl-L-methionine into Met and 5'-dA. The protein is Antilisterial bacteriocin subtilosin biosynthesis protein AlbA (albA) of Bacillus subtilis (strain 168).